The sequence spans 106 residues: Thiosulfate sulfurtransferase GlpE (106 aa).

In terms of domain architecture, Rhodanese spans 17–105 (EQSEAKLVDI…WQRAELPIVR (89 aa)). Residue C65 is the Cysteine persulfide intermediate of the active site.

This sequence belongs to the GlpE family.

It localises to the cytoplasm. It carries out the reaction thiosulfate + hydrogen cyanide = thiocyanate + sulfite + 2 H(+). The enzyme catalyses thiosulfate + [thioredoxin]-dithiol = [thioredoxin]-disulfide + hydrogen sulfide + sulfite + 2 H(+). In terms of biological role, transferase that catalyzes the transfer of sulfur from thiosulfate to thiophilic acceptors such as cyanide or dithiols. May function in a CysM-independent thiosulfate assimilation pathway by catalyzing the conversion of thiosulfate to sulfite, which can then be used for L-cysteine biosynthesis. The sequence is that of Thiosulfate sulfurtransferase GlpE from Vibrio campbellii (strain ATCC BAA-1116).